The primary structure comprises 145 residues: Flagellar assembly factor FliW (145 aa).

It belongs to the FliW family. As to quaternary structure, interacts with translational regulator CsrA and flagellin(s).

It localises to the cytoplasm. Its function is as follows. Acts as an anti-CsrA protein, binds CsrA and prevents it from repressing translation of its target genes, one of which is flagellin. Binds to flagellin and participates in the assembly of the flagellum. This Exiguobacterium sp. (strain ATCC BAA-1283 / AT1b) protein is Flagellar assembly factor FliW.